Here is a 263-residue protein sequence, read N- to C-terminus: Type III pantothenate kinase (263 aa).

6-13 (DVGNTRIK) contacts ATP. Residues Tyr-92 and 99–102 (GTDR) each bind substrate. Asp-101 serves as the catalytic Proton acceptor. An ATP-binding site is contributed by Thr-124. Substrate is bound at residue Thr-174.

The protein belongs to the type III pantothenate kinase family. Homodimer. Requires NH4(+) as cofactor. It depends on K(+) as a cofactor.

Its subcellular location is the cytoplasm. The enzyme catalyses (R)-pantothenate + ATP = (R)-4'-phosphopantothenate + ADP + H(+). It functions in the pathway cofactor biosynthesis; coenzyme A biosynthesis; CoA from (R)-pantothenate: step 1/5. In terms of biological role, catalyzes the phosphorylation of pantothenate (Pan), the first step in CoA biosynthesis. This chain is Type III pantothenate kinase, found in Azoarcus sp. (strain BH72).